The sequence spans 65 residues: Alpha-toxin BeM10 (65 aa).

An LCN-type CS-alpha/beta domain is found at 2–65 (RDGYIADDKD…IKQKVSGKCN (64 aa)). Intrachain disulfides connect C12-C64, C16-C35, C22-C45, and C26-C47.

The protein belongs to the long (4 C-C) scorpion toxin superfamily. Sodium channel inhibitor family. Alpha subfamily. In terms of tissue distribution, expressed by the venom gland.

It is found in the secreted. Alpha toxins bind voltage-independently at site-3 of sodium channels (Nav) and inhibit the inactivation of the activated channels, thereby blocking neuronal transmission. Has paralytic activity in mice. This is Alpha-toxin BeM10 from Mesobuthus eupeus (Lesser Asian scorpion).